Consider the following 219-residue polypeptide: uncharacterized protein (219 aa).

The segment at 42-71 (RQPRVVPVTSSDPEVVDDEDDEDQSDDSDE) is disordered. The segment covering 45 to 54 (RVVPVTSSDP) has biased composition (low complexity). A compositionally biased stretch (acidic residues) spans 55 to 71 (EVVDDEDDEDQSDDSDE).

This is an uncharacterized protein from Dryophytes versicolor (chameleon treefrog).